Consider the following 150-residue polypeptide: Urease accessory protein UreE (150 aa).

This sequence belongs to the UreE family.

It localises to the cytoplasm. Its function is as follows. Involved in urease metallocenter assembly. Binds nickel. Probably functions as a nickel donor during metallocenter assembly. This is Urease accessory protein UreE from Streptococcus salivarius (strain 57.I).